The sequence spans 120 residues: Large ribosomal subunit protein uL18 (120 aa).

The segment at methionine 1–glycine 22 is disordered. Positions alanine 8 to isoleucine 20 are enriched in basic residues.

The protein belongs to the universal ribosomal protein uL18 family. In terms of assembly, part of the 50S ribosomal subunit; part of the 5S rRNA/L5/L18/L25 subcomplex. Contacts the 5S and 23S rRNAs.

This is one of the proteins that bind and probably mediate the attachment of the 5S RNA into the large ribosomal subunit, where it forms part of the central protuberance. This is Large ribosomal subunit protein uL18 from Gloeobacter violaceus (strain ATCC 29082 / PCC 7421).